The following is a 222-amino-acid chain: uncharacterized protein (222 aa).

The interval 142–222 is disordered; the sequence is ARRGGCVHPP…LPDPPSAGHL (81 aa). The segment covering 160-169 has biased composition (low complexity); sequence QSRSISSRRA. Basic residues predominate over residues 182–196; it reads PRRRPHRHRTRPQTR.

It belongs to the Rv1128c/1148c/1588c/1702c/1945/3466 family.

This is an uncharacterized protein from Mycobacterium tuberculosis (strain CDC 1551 / Oshkosh).